A 239-amino-acid chain; its full sequence is Orotidine 5'-phosphate decarboxylase (239 aa).

Substrate-binding positions include Asp-10, Lys-32, 59-68, Thr-122, Arg-184, Gln-193, Gly-213, and Arg-214; that span reads DLKLHDIPNT. Lys-61 serves as the catalytic Proton donor.

Belongs to the OMP decarboxylase family. Type 1 subfamily. In terms of assembly, homodimer.

It carries out the reaction orotidine 5'-phosphate + H(+) = UMP + CO2. Its pathway is pyrimidine metabolism; UMP biosynthesis via de novo pathway; UMP from orotate: step 2/2. Functionally, catalyzes the decarboxylation of orotidine 5'-monophosphate (OMP) to uridine 5'-monophosphate (UMP). The chain is Orotidine 5'-phosphate decarboxylase from Geobacillus sp. (strain WCH70).